The sequence spans 881 residues: Phosphoenolpyruvate carboxylase (881 aa).

Catalysis depends on residues His-139 and Lys-544.

The protein belongs to the PEPCase type 1 family. The cofactor is Mg(2+).

The enzyme catalyses oxaloacetate + phosphate = phosphoenolpyruvate + hydrogencarbonate. Functionally, forms oxaloacetate, a four-carbon dicarboxylic acid source for the tricarboxylic acid cycle. The protein is Phosphoenolpyruvate carboxylase of Marinobacter nauticus (strain ATCC 700491 / DSM 11845 / VT8) (Marinobacter aquaeolei).